A 572-amino-acid chain; its full sequence is Proline--tRNA ligase (572 aa).

The protein belongs to the class-II aminoacyl-tRNA synthetase family. ProS type 1 subfamily. In terms of assembly, homodimer.

The protein localises to the cytoplasm. It carries out the reaction tRNA(Pro) + L-proline + ATP = L-prolyl-tRNA(Pro) + AMP + diphosphate. Its function is as follows. Catalyzes the attachment of proline to tRNA(Pro) in a two-step reaction: proline is first activated by ATP to form Pro-AMP and then transferred to the acceptor end of tRNA(Pro). As ProRS can inadvertently accommodate and process non-cognate amino acids such as alanine and cysteine, to avoid such errors it has two additional distinct editing activities against alanine. One activity is designated as 'pretransfer' editing and involves the tRNA(Pro)-independent hydrolysis of activated Ala-AMP. The other activity is designated 'posttransfer' editing and involves deacylation of mischarged Ala-tRNA(Pro). The misacylated Cys-tRNA(Pro) is not edited by ProRS. The sequence is that of Proline--tRNA ligase from Escherichia coli O9:H4 (strain HS).